The chain runs to 247 residues: Probable transcriptional regulatory protein Dvul_0986 (247 aa).

Residues 1–22 are disordered; it reads MAGHSKWANIQHRKGRQDAKRG.

This sequence belongs to the TACO1 family.

Its subcellular location is the cytoplasm. This chain is Probable transcriptional regulatory protein Dvul_0986, found in Nitratidesulfovibrio vulgaris (strain DP4) (Desulfovibrio vulgaris).